Here is a 490-residue protein sequence, read N- to C-terminus: Bifunctional protein HldE (490 aa).

The segment at 1 to 330 (MFSFDALLQA…RRILPHASLA (330 aa)) is ribokinase. 205–208 (NRKE) is an ATP binding site. Residue D275 is part of the active site. Positions 358 to 490 (FTNGCFDILH…LVARAREGQS (133 aa)) are cytidylyltransferase.

It in the N-terminal section; belongs to the carbohydrate kinase PfkB family. This sequence in the C-terminal section; belongs to the cytidylyltransferase family. Homodimer.

The enzyme catalyses D-glycero-beta-D-manno-heptose 7-phosphate + ATP = D-glycero-beta-D-manno-heptose 1,7-bisphosphate + ADP + H(+). It catalyses the reaction D-glycero-beta-D-manno-heptose 1-phosphate + ATP + H(+) = ADP-D-glycero-beta-D-manno-heptose + diphosphate. It functions in the pathway nucleotide-sugar biosynthesis; ADP-L-glycero-beta-D-manno-heptose biosynthesis; ADP-L-glycero-beta-D-manno-heptose from D-glycero-beta-D-manno-heptose 7-phosphate: step 1/4. It participates in nucleotide-sugar biosynthesis; ADP-L-glycero-beta-D-manno-heptose biosynthesis; ADP-L-glycero-beta-D-manno-heptose from D-glycero-beta-D-manno-heptose 7-phosphate: step 3/4. Its function is as follows. Catalyzes the phosphorylation of D-glycero-D-manno-heptose 7-phosphate at the C-1 position to selectively form D-glycero-beta-D-manno-heptose-1,7-bisphosphate. Catalyzes the ADP transfer from ATP to D-glycero-beta-D-manno-heptose 1-phosphate, yielding ADP-D-glycero-beta-D-manno-heptose. This chain is Bifunctional protein HldE, found in Rhodopseudomonas palustris (strain ATCC BAA-98 / CGA009).